The sequence spans 65 residues: Large ribosomal subunit protein bL35 (65 aa).

This sequence belongs to the bacterial ribosomal protein bL35 family.

The polypeptide is Large ribosomal subunit protein bL35 (Thermotoga maritima (strain ATCC 43589 / DSM 3109 / JCM 10099 / NBRC 100826 / MSB8)).